The following is a 475-amino-acid chain: Ribulose bisphosphate carboxylase large chain (475 aa).

Positions 1-2 (MA) are excised as a propeptide. Pro3 carries the N-acetylproline modification. The residue at position 14 (Lys14) is an N6,N6,N6-trimethyllysine. Positions 123 and 173 each coordinate substrate. The active-site Proton acceptor is Lys175. Position 177 (Lys177) interacts with substrate. Positions 201, 203, and 204 each coordinate Mg(2+). Residue Lys201 is modified to N6-carboxylysine. His294 functions as the Proton acceptor in the catalytic mechanism. 3 residues coordinate substrate: Arg295, His327, and Ser379.

Belongs to the RuBisCO large chain family. Type I subfamily. As to quaternary structure, heterohexadecamer of 8 large chains and 8 small chains; disulfide-linked. The disulfide link is formed within the large subunit homodimers. Mg(2+) serves as cofactor. Post-translationally, the disulfide bond which can form in the large chain dimeric partners within the hexadecamer appears to be associated with oxidative stress and protein turnover.

Its subcellular location is the plastid. It localises to the chloroplast. The enzyme catalyses 2 (2R)-3-phosphoglycerate + 2 H(+) = D-ribulose 1,5-bisphosphate + CO2 + H2O. It catalyses the reaction D-ribulose 1,5-bisphosphate + O2 = 2-phosphoglycolate + (2R)-3-phosphoglycerate + 2 H(+). Functionally, ruBisCO catalyzes two reactions: the carboxylation of D-ribulose 1,5-bisphosphate, the primary event in carbon dioxide fixation, as well as the oxidative fragmentation of the pentose substrate in the photorespiration process. Both reactions occur simultaneously and in competition at the same active site. The polypeptide is Ribulose bisphosphate carboxylase large chain (Bryopsis maxima (Green alga)).